Here is a 268-residue protein sequence, read N- to C-terminus: Secreted RxLR effector protein 32 (268 aa).

Positions 1 to 21 (MRGAYYVAFALLVAASTRTAA) are cleaved as a signal peptide. Positions 50-71 (RILRESPDPKDRLPVYASDEER) match the RxLR-dEER motif. A disordered region spans residues 120–257 (PKLEIKKSKR…PTPESLGIGG (138 aa)). The span at 148 to 161 (SNSKKSLVSSASAK) shows a compositional bias: low complexity. A compositionally biased stretch (basic and acidic residues) spans 212 to 224 (NLDKNKRPDEAKI).

The protein belongs to the RxLR effector family.

The protein resides in the secreted. It localises to the host cell. In terms of biological role, secreted effector that completely suppresses the host cell death induced by cell death-inducing proteins. This chain is Secreted RxLR effector protein 32, found in Plasmopara viticola (Downy mildew of grapevine).